A 72-amino-acid chain; its full sequence is Prophage late control protein OgrK (72 aa).

Cryptic version of the phage P2 OGR protein which acts as an activator of P2 late transcription. This is Prophage late control protein OgrK (ogrK) from Escherichia coli (strain K12).